A 1380-amino-acid chain; its full sequence is DNA-directed RNA polymerase subunit beta (1380 aa).

Belongs to the RNA polymerase beta chain family. The RNAP catalytic core consists of 2 alpha, 1 beta, 1 beta' and 1 omega subunit. When a sigma factor is associated with the core the holoenzyme is formed, which can initiate transcription.

It catalyses the reaction RNA(n) + a ribonucleoside 5'-triphosphate = RNA(n+1) + diphosphate. Functionally, DNA-dependent RNA polymerase catalyzes the transcription of DNA into RNA using the four ribonucleoside triphosphates as substrates. The polypeptide is DNA-directed RNA polymerase subunit beta (Rhizobium meliloti (strain 1021) (Ensifer meliloti)).